The following is a 685-amino-acid chain: Keratin, type II cytoskeletal 2 epidermal (685 aa).

Positions 1–20 are disordered; sequence MSCQISCKSRRGGGGGGGGG. The interval 1-196 is head; sequence MSCQISCKSR…DPEIQNVKSQ (196 aa). Arg-22 is subject to Asymmetric dimethylarginine. Phosphoserine is present on residues Ser-25 and Ser-28. Residue Arg-52 is modified to Omega-N-methylarginine. Ser-64 carries the post-translational modification Phosphoserine. A coil 1A region spans residues 197–232; sequence EREQIKTLNNKFASFIDTVRFLEQQNQVLHTKWELL. Positions 197 to 511 constitute an IF rod domain; it reads EREQIKTLNN…KLLEGEECRM (315 aa). Residues 233 to 251 form a linker 1 region; sequence QQLDVGTRTTNLDPVFQAY. Residues 252-343 are coil 1B; that stretch reads IGILKKQVDR…TLYDTELSQL (92 aa). Residues 344–367 are linker 12; the sequence is QQNVTDTNVILSMDNNRNLDLDSI. Residues 368 to 507 form a coil 2 region; the sequence is IAEVQSQYEI…ATYRKLLEGE (140 aa). The interval 508–685 is tail; sequence ECRMSGDFSD…CGSGVTFSFR (178 aa). The tract at residues 532 to 685 is disordered; the sequence is VASKAGFGSG…CGSGVTFSFR (154 aa). Gly residues predominate over residues 538–678; that stretch reads FGSGGQSSGG…GSGSGEGCGS (141 aa). An omega-N-methylarginine mark is found at Arg-554, Arg-588, Arg-603, and Arg-653.

It belongs to the intermediate filament family. Heterotetramer of two type I and two type II keratins. Associates with KRT10.

Its subcellular location is the cytoplasm. Its function is as follows. Probably contributes to terminal cornification. Associated with keratinocyte activation, proliferation and keratinization. Required for maintenance of corneocytes and keratin filaments in suprabasal keratinocytes in the epidermis of the ear, potentially via moderation of expression and localization of keratins and their partner proteins. Plays a role in the establishment of the epidermal barrier on plantar skin. The chain is Keratin, type II cytoskeletal 2 epidermal from Rattus norvegicus (Rat).